Consider the following 160-residue polypeptide: DNA polymerase delta subunit 4 (160 aa).

The interval Met1–Val48 is disordered. Positions Ala8–Ile17 are enriched in polar residues.

This sequence belongs to the DNA polymerase delta subunit 4 family. In terms of assembly, heterotetramer that consist of the pol3, cdc1, cdc27 and cdm1 subunits. Interacts with cdc1 and pol3.

It is found in the nucleus. Its function is as follows. Appears to have a role in the stabilization of the DNA polymerase delta complex. The polypeptide is DNA polymerase delta subunit 4 (cdm1) (Schizosaccharomyces pombe (strain 972 / ATCC 24843) (Fission yeast)).